Here is a 340-residue protein sequence, read N- to C-terminus: Replication initiation protein (340 aa).

The disordered stretch occupies residues 38–58 (PERKRTKRRRGEHSTKPKCEN).

This is Replication initiation protein (repA1) from Escherichia coli.